A 953-amino-acid polypeptide reads, in one-letter code: Valine--tRNA ligase (953 aa).

Residues 42-52 (PNVTGSLHMGH) carry the 'HIGH' region motif. Residues 554–558 (KMSKS) carry the 'KMSKS' region motif. K557 contacts ATP. A coiled-coil region spans residues 884 to 952 (LIDKDAELDR…LEQQKATIAA (69 aa)).

The protein belongs to the class-I aminoacyl-tRNA synthetase family. ValS type 1 subfamily. In terms of assembly, monomer.

The protein resides in the cytoplasm. It carries out the reaction tRNA(Val) + L-valine + ATP = L-valyl-tRNA(Val) + AMP + diphosphate. Functionally, catalyzes the attachment of valine to tRNA(Val). As ValRS can inadvertently accommodate and process structurally similar amino acids such as threonine, to avoid such errors, it has a 'posttransfer' editing activity that hydrolyzes mischarged Thr-tRNA(Val) in a tRNA-dependent manner. The protein is Valine--tRNA ligase of Vibrio cholerae serotype O1 (strain ATCC 39315 / El Tor Inaba N16961).